The primary structure comprises 250 residues: Bcl-2-like protein 12 (250 aa).

The disordered stretch occupies residues 24 to 46 (GEAAGSPVPTPPRSPAQEEPTDF). At Ser29 the chain carries Phosphoserine. Thr33 carries the post-translational modification Phosphothreonine. Phosphoserine is present on Ser37. Omega-N-methylarginine is present on Arg60. 5 positions are modified to phosphoserine: Ser111, Ser158, Ser159, Ser161, and Ser189. A BH2 motif is present at residues 227–238 (WIQAHGGWEGIL).

This sequence belongs to the Bcl-2 family. As to expression, expressed mainly in breast, thymus, prostate, fetal liver, colon, placenta, pancreas, small intestine, spinal cord, kidney, and bone marrow and to a lesser extent in many other tissues. Isoform 2 is primarily expressed in skeletal muscle.

The chain is Bcl-2-like protein 12 from Homo sapiens (Human).